The chain runs to 236 residues: Phosphoribosylaminoimidazole-succinocarboxamide synthase (236 aa).

The protein belongs to the SAICAR synthetase family.

It catalyses the reaction 5-amino-1-(5-phospho-D-ribosyl)imidazole-4-carboxylate + L-aspartate + ATP = (2S)-2-[5-amino-1-(5-phospho-beta-D-ribosyl)imidazole-4-carboxamido]succinate + ADP + phosphate + 2 H(+). Its pathway is purine metabolism; IMP biosynthesis via de novo pathway; 5-amino-1-(5-phospho-D-ribosyl)imidazole-4-carboxamide from 5-amino-1-(5-phospho-D-ribosyl)imidazole-4-carboxylate: step 1/2. In Rickettsia bellii (strain OSU 85-389), this protein is Phosphoribosylaminoimidazole-succinocarboxamide synthase.